Consider the following 598-residue polypeptide: Aluminum-activated malate transporter 9 (598 aa).

The next 6 helical transmembrane spans lie at 88–108, 117–137, 144–164, 170–190, 194–214, and 227–247; these read IVFS…IFYQ, YSVW…GATL, ALGT…STLF, IFCT…KLYP, AYEY…ISGF, and FLLI…IYPI.

Belongs to the aromatic acid exporter (TC 2.A.85) family. Expressed in hypocotyls, leaves, roots, flowers, sepals and stamina. In leaves, expressed almost exclusively in mesophyll cells.

Its subcellular location is the vacuole membrane. With respect to regulation, slow activation by external aluminum. Its function is as follows. Vacuolar malate channel. Has a higher selectivity for malate than for fumarate. Also exhibits a weak chloride conductance. The chain is Aluminum-activated malate transporter 9 (ALMT9) from Arabidopsis thaliana (Mouse-ear cress).